Reading from the N-terminus, the 232-residue chain is 7-cyano-7-deazaguanine synthase (232 aa).

11 to 21 provides a ligand contact to ATP; the sequence is ASGGMDSATAA. Positions 192, 200, 203, and 206 each coordinate Zn(2+).

It belongs to the QueC family. It depends on Zn(2+) as a cofactor.

The catalysed reaction is 7-carboxy-7-deazaguanine + NH4(+) + ATP = 7-cyano-7-deazaguanine + ADP + phosphate + H2O + H(+). Its pathway is purine metabolism; 7-cyano-7-deazaguanine biosynthesis. Catalyzes the ATP-dependent conversion of 7-carboxy-7-deazaguanine (CDG) to 7-cyano-7-deazaguanine (preQ(0)). The polypeptide is 7-cyano-7-deazaguanine synthase (Haloarcula marismortui (strain ATCC 43049 / DSM 3752 / JCM 8966 / VKM B-1809) (Halobacterium marismortui)).